Reading from the N-terminus, the 196-residue chain is ATP-dependent Clp protease proteolytic subunit (196 aa).

Ser101 serves as the catalytic Nucleophile. His126 is a catalytic residue.

It belongs to the peptidase S14 family. As to quaternary structure, component of the chloroplastic Clp protease core complex.

It localises to the plastid. Its subcellular location is the chloroplast stroma. The catalysed reaction is Hydrolysis of proteins to small peptides in the presence of ATP and magnesium. alpha-casein is the usual test substrate. In the absence of ATP, only oligopeptides shorter than five residues are hydrolyzed (such as succinyl-Leu-Tyr-|-NHMec, and Leu-Tyr-Leu-|-Tyr-Trp, in which cleavage of the -Tyr-|-Leu- and -Tyr-|-Trp bonds also occurs).. Functionally, cleaves peptides in various proteins in a process that requires ATP hydrolysis. Has a chymotrypsin-like activity. Plays a major role in the degradation of misfolded proteins. The polypeptide is ATP-dependent Clp protease proteolytic subunit (Pleurastrum terricola (Filamentous green alga)).